The following is a 300-amino-acid chain: E3 ubiquitin-protein ligase RNF212B (300 aa).

The segment at 6–40 (CNQCFRKDGAHFFVTSCGHIFCKKCVTLEKCAVCG) adopts an RING-type zinc-finger fold. Positions 87–124 (LLIAFYKHRITKLETAMQEAQQALVSQDKELSVLRKEN) form a coiled coil. The disordered stretch occupies residues 141–232 (YQGSRSITPR…SYRTSSASSG (92 aa)). Positions 155 to 165 (TSPSQSVTPRP) are enriched in polar residues. A compositionally biased stretch (low complexity) spans 166-182 (SFQHSSQVVSRSSSAES). Positions 191 to 200 (GSLGQGGRGL) are enriched in gly residues. Over residues 211–232 (NETPSPASTHSLSYRTSSASSG) the composition is skewed to polar residues.

Homodimer. In terms of processing, autoubiquitinated.

It is found in the chromosome. It catalyses the reaction S-ubiquitinyl-[E2 ubiquitin-conjugating enzyme]-L-cysteine + [acceptor protein]-L-lysine = [E2 ubiquitin-conjugating enzyme]-L-cysteine + N(6)-ubiquitinyl-[acceptor protein]-L-lysine.. It functions in the pathway protein modification; protein ubiquitination. Functionally, ubiquitin E3 ligase that acts as a crucial factor for crossing-over (CO) formation during meiosis. Essential for normal prophase I progression and for ensuring appropriate CO designation in meiosis. Recruits key components of the cross-over machinery either directly ou indirectly, leading to the activation of the MutL-gamma complex. The function of RNF212B in CO designation is dependent on its catalytic activity. The sequence is that of E3 ubiquitin-protein ligase RNF212B (RNF212B) from Homo sapiens (Human).